We begin with the raw amino-acid sequence, 343 residues long: N-acetyl-gamma-glutamyl-phosphate reductase (343 aa).

The active site involves C149.

The protein belongs to the NAGSA dehydrogenase family. Type 1 subfamily.

It localises to the cytoplasm. The catalysed reaction is N-acetyl-L-glutamate 5-semialdehyde + phosphate + NADP(+) = N-acetyl-L-glutamyl 5-phosphate + NADPH + H(+). It participates in amino-acid biosynthesis; L-arginine biosynthesis; N(2)-acetyl-L-ornithine from L-glutamate: step 3/4. In terms of biological role, catalyzes the NADPH-dependent reduction of N-acetyl-5-glutamyl phosphate to yield N-acetyl-L-glutamate 5-semialdehyde. The polypeptide is N-acetyl-gamma-glutamyl-phosphate reductase (Exiguobacterium sibiricum (strain DSM 17290 / CCUG 55495 / CIP 109462 / JCM 13490 / 255-15)).